We begin with the raw amino-acid sequence, 140 residues long: Large ribosomal subunit protein uL14 (140 aa).

Serine 17 is modified (phosphoserine). Tyrosine 38 is modified (phosphotyrosine).

This sequence belongs to the universal ribosomal protein uL14 family. In terms of assembly, component of the large ribosomal subunit.

The protein resides in the cytoplasm. Component of the large ribosomal subunit. The ribosome is a large ribonucleoprotein complex responsible for the synthesis of proteins in the cell. The chain is Large ribosomal subunit protein uL14 (RPL23) from Pongo abelii (Sumatran orangutan).